The sequence spans 258 residues: ADP-ribose glycohydrolase MACROD1 (258 aa).

Lys-29, Lys-36, and Lys-62 each carry N6-succinyllysine. Lys-71 is covalently cross-linked (Glycyl lysine isopeptide (Lys-Gly) (interchain with G-Cter in SUMO2)). Positions 74-255 (NPKYKKDKQL…IYQERLPHYF (182 aa)) constitute a Macro domain. Residue 92-94 (GDI) participates in substrate binding. N6-acetyllysine is present on Lys-96. Residues 105 to 107 (AAN), 112 to 117 (GGGGVD), 200 to 206 (ISTGVFG), and Phe-239 contribute to the substrate site.

It belongs to the MacroD-type family. MacroD1/2-like subfamily. In terms of assembly, interacts with ESR1; Interacts in a manner that is estrogen independent but is enhanced by estrogen. Interacts (via macro domain) with AR.

The protein localises to the nucleus. It catalyses the reaction 3''-O-acetyl-ADP-D-ribose + H2O = ADP-D-ribose + acetate + H(+). The catalysed reaction is 2''-O-acetyl-ADP-D-ribose + H2O = ADP-D-ribose + acetate + H(+). The enzyme catalyses 4-O-(ADP-D-ribosyl)-L-aspartyl-[protein] + H2O = L-aspartyl-[protein] + ADP-D-ribose + H(+). It carries out the reaction 5-O-(ADP-D-ribosyl)-L-glutamyl-[protein] + H2O = L-glutamyl-[protein] + ADP-D-ribose + H(+). It catalyses the reaction alpha-NAD(+) + H2O = ADP-D-ribose + nicotinamide + H(+). Subject to competitive inhibition by the product ADP-ribose. In terms of biological role, removes ADP-ribose from aspartate and glutamate residues in proteins bearing a single ADP-ribose moiety. Inactive towards proteins bearing poly-ADP-ribose. Deacetylates O-acetyl-ADP ribose, a signaling molecule generated by the deacetylation of acetylated lysine residues in histones and other proteins. Plays a role in estrogen signaling. Binds to androgen receptor (AR) and amplifies the transactivation function of AR in response to androgen. May play an important role in carcinogenesis and/or progression of hormone-dependent cancers by feed-forward mechanism that activates ESR1 transactivation. Could be an ESR1 coactivator, providing a positive feedback regulatory loop for ESR1 signal transduction. Could be involved in invasive growth by down-regulating CDH1 in endometrial cancer cells. Enhances ESR1-mediated transcription activity. This is ADP-ribose glycohydrolase MACROD1 (Macrod1) from Rattus norvegicus (Rat).